Here is a 394-residue protein sequence, read N- to C-terminus: Ribulose bisphosphate carboxylase large chain (394 aa).

An N6,N6,N6-trimethyllysine modification is found at K5. N114 and T164 together coordinate substrate. K166 serves as the catalytic Proton acceptor. Position 168 (K168) interacts with substrate. The Mg(2+) site is built by K192, D194, and E195. K192 carries the N6-carboxylysine modification. H285 (proton acceptor) is an active-site residue. The substrate site is built by R286, H318, and S370.

The protein belongs to the RuBisCO large chain family. Type I subfamily. Heterohexadecamer of 8 large chains and 8 small chains. It depends on Mg(2+) as a cofactor.

The protein resides in the plastid. It localises to the chloroplast. The catalysed reaction is 2 (2R)-3-phosphoglycerate + 2 H(+) = D-ribulose 1,5-bisphosphate + CO2 + H2O. It catalyses the reaction D-ribulose 1,5-bisphosphate + O2 = 2-phosphoglycolate + (2R)-3-phosphoglycerate + 2 H(+). Functionally, ruBisCO catalyzes two reactions: the carboxylation of D-ribulose 1,5-bisphosphate, the primary event in carbon dioxide fixation, as well as the oxidative fragmentation of the pentose substrate in the photorespiration process. Both reactions occur simultaneously and in competition at the same active site. The protein is Ribulose bisphosphate carboxylase large chain (rbcL) of Euryale ferox (Gorgon plant).